Reading from the N-terminus, the 412-residue chain is Short-chain specific acyl-CoA dehydrogenase, mitochondrial (412 aa).

A mitochondrion-targeting transit peptide spans Met-1–Arg-24. Thr-27 bears the Phosphothreonine mark. Residue Lys-51 is modified to N6-acetyllysine; alternate. Position 51 is an N6-succinyllysine; alternate (Lys-51). At Lys-72 the chain carries N6-acetyllysine. At Lys-129 the chain carries N6-acetyllysine; alternate. Lys-129 bears the N6-succinyllysine; alternate mark. Residues Phe-152–Ser-161 and Trp-185–Thr-187 contribute to the FAD site. Ser-161 lines the substrate pocket. Residue Lys-208 is modified to N6-acetyllysine. Lys-262 is modified (N6-acetyllysine; alternate). Lys-262 is subject to N6-succinyllysine; alternate. Asp-269 to Arg-272 provides a ligand contact to substrate. Arg-297 lines the FAD pocket. N6-acetyllysine; alternate is present on Lys-306. Lys-306 is subject to N6-succinyllysine; alternate. FAD contacts are provided by residues Gln-308 and Gln-365 to Gly-369. Glu-392 (proton acceptor) is an active-site residue. Gly-393 lines the substrate pocket. Thr-394–Glu-396 is an FAD binding site.

It belongs to the acyl-CoA dehydrogenase family. In terms of assembly, homotetramer. Requires FAD as cofactor.

The protein localises to the mitochondrion matrix. It catalyses the reaction a short-chain 2,3-saturated fatty acyl-CoA + oxidized [electron-transfer flavoprotein] + H(+) = a short-chain (2E)-enoyl-CoA + reduced [electron-transfer flavoprotein]. It carries out the reaction butanoyl-CoA + oxidized [electron-transfer flavoprotein] + H(+) = (2E)-butenoyl-CoA + reduced [electron-transfer flavoprotein]. The catalysed reaction is pentanoyl-CoA + oxidized [electron-transfer flavoprotein] + H(+) = (2E)-pentenoyl-CoA + reduced [electron-transfer flavoprotein]. The enzyme catalyses hexanoyl-CoA + oxidized [electron-transfer flavoprotein] + H(+) = (2E)-hexenoyl-CoA + reduced [electron-transfer flavoprotein]. It participates in lipid metabolism; mitochondrial fatty acid beta-oxidation. Functionally, short-chain specific acyl-CoA dehydrogenase is one of the acyl-CoA dehydrogenases that catalyze the first step of mitochondrial fatty acid beta-oxidation, an aerobic process breaking down fatty acids into acetyl-CoA and allowing the production of energy from fats. The first step of fatty acid beta-oxidation consists in the removal of one hydrogen from C-2 and C-3 of the straight-chain fatty acyl-CoA thioester, resulting in the formation of trans-2-enoyl-CoA. Among the different mitochondrial acyl-CoA dehydrogenases, short-chain specific acyl-CoA dehydrogenase acts specifically on acyl-CoAs with saturated 4 to 6 carbons long primary chains. This Bos taurus (Bovine) protein is Short-chain specific acyl-CoA dehydrogenase, mitochondrial (ACADS).